The following is a 111-amino-acid chain: V-type proton ATPase subunit G 2 (111 aa).

The protein belongs to the V-ATPase G subunit family. As to quaternary structure, V-ATPase is a heteromultimeric enzyme composed of a peripheral catalytic V1 complex (components A to H) attached to an integral membrane V0 proton pore complex (components: a, c, c', c'' and d).

Catalytic subunit of the peripheral V1 complex of vacuolar ATPase (V-ATPase). V-ATPase is responsible for acidifying a variety of intracellular compartments in eukaryotic cells. The protein is V-type proton ATPase subunit G 2 (VATG2) of Nicotiana tabacum (Common tobacco).